Reading from the N-terminus, the 317-residue chain is Proline iminopeptidase (317 aa).

Positions 41–296 constitute an AB hydrolase-1 domain; the sequence is VFIHGGPGGG…ELHIVEGAGH (256 aa). The active-site Nucleophile is the S113. The active site involves D268. Residue H296 is the Proton donor of the active site.

This sequence belongs to the peptidase S33 family. Monomer.

It localises to the cytoplasm. It carries out the reaction Release of N-terminal proline from a peptide.. Functionally, specifically catalyzes the removal of N-terminal proline residues from peptides. The sequence is that of Proline iminopeptidase (pip) from Serratia marcescens.